The sequence spans 262 residues: Acyl-[acyl-carrier-protein]--UDP-N-acetylglucosamine O-acyltransferase (262 aa).

It belongs to the transferase hexapeptide repeat family. LpxA subfamily. As to quaternary structure, homotrimer.

Its subcellular location is the cytoplasm. It carries out the reaction a (3R)-hydroxyacyl-[ACP] + UDP-N-acetyl-alpha-D-glucosamine = a UDP-3-O-[(3R)-3-hydroxyacyl]-N-acetyl-alpha-D-glucosamine + holo-[ACP]. It participates in glycolipid biosynthesis; lipid IV(A) biosynthesis; lipid IV(A) from (3R)-3-hydroxytetradecanoyl-[acyl-carrier-protein] and UDP-N-acetyl-alpha-D-glucosamine: step 1/6. In terms of biological role, involved in the biosynthesis of lipid A, a phosphorylated glycolipid that anchors the lipopolysaccharide to the outer membrane of the cell. This Salmonella heidelberg (strain SL476) protein is Acyl-[acyl-carrier-protein]--UDP-N-acetylglucosamine O-acyltransferase.